The chain runs to 372 residues: Glutamate 5-kinase (372 aa).

Lys14 serves as a coordination point for ATP. Substrate-binding residues include Ser54, Asp141, and Asn153. 173 to 174 lines the ATP pocket; the sequence is TD. Positions 280-358 constitute a PUA domain; the sequence is RGTLVLDEGA…DAIVGVLGYM (79 aa).

Belongs to the glutamate 5-kinase family.

It is found in the cytoplasm. It carries out the reaction L-glutamate + ATP = L-glutamyl 5-phosphate + ADP. It participates in amino-acid biosynthesis; L-proline biosynthesis; L-glutamate 5-semialdehyde from L-glutamate: step 1/2. Functionally, catalyzes the transfer of a phosphate group to glutamate to form L-glutamate 5-phosphate. The sequence is that of Glutamate 5-kinase from Pseudomonas fluorescens (strain ATCC BAA-477 / NRRL B-23932 / Pf-5).